Reading from the N-terminus, the 430-residue chain is UDP-N-acetylglucosamine 1-carboxyvinyltransferase 1 (430 aa).

22 to 23 (KN) is a phosphoenolpyruvate binding site. Arg93 contributes to the UDP-N-acetyl-alpha-D-glucosamine binding site. Cys117 functions as the Proton donor in the catalytic mechanism. A 2-(S-cysteinyl)pyruvic acid O-phosphothioketal modification is found at Cys117. Residues 122–126 (RPVDL), Asp305, and Val327 contribute to the UDP-N-acetyl-alpha-D-glucosamine site.

This sequence belongs to the EPSP synthase family. MurA subfamily.

It localises to the cytoplasm. It catalyses the reaction phosphoenolpyruvate + UDP-N-acetyl-alpha-D-glucosamine = UDP-N-acetyl-3-O-(1-carboxyvinyl)-alpha-D-glucosamine + phosphate. It participates in cell wall biogenesis; peptidoglycan biosynthesis. Its function is as follows. Cell wall formation. Adds enolpyruvyl to UDP-N-acetylglucosamine. The polypeptide is UDP-N-acetylglucosamine 1-carboxyvinyltransferase 1 (Listeria monocytogenes serovar 1/2a (strain ATCC BAA-679 / EGD-e)).